Here is a 381-residue protein sequence, read N- to C-terminus: Arginine biosynthesis bifunctional protein ArgJ (381 aa).

Residues T143, K165, T176, E255, N376, and T381 each coordinate substrate. T176 acts as the Nucleophile in catalysis.

It belongs to the ArgJ family. As to quaternary structure, heterotetramer of two alpha and two beta chains.

The protein resides in the cytoplasm. It catalyses the reaction N(2)-acetyl-L-ornithine + L-glutamate = N-acetyl-L-glutamate + L-ornithine. The enzyme catalyses L-glutamate + acetyl-CoA = N-acetyl-L-glutamate + CoA + H(+). It functions in the pathway amino-acid biosynthesis; L-arginine biosynthesis; L-ornithine and N-acetyl-L-glutamate from L-glutamate and N(2)-acetyl-L-ornithine (cyclic): step 1/1. Its pathway is amino-acid biosynthesis; L-arginine biosynthesis; N(2)-acetyl-L-ornithine from L-glutamate: step 1/4. Functionally, catalyzes two activities which are involved in the cyclic version of arginine biosynthesis: the synthesis of N-acetylglutamate from glutamate and acetyl-CoA as the acetyl donor, and of ornithine by transacetylation between N(2)-acetylornithine and glutamate. In Thermus thermophilus (strain ATCC BAA-163 / DSM 7039 / HB27), this protein is Arginine biosynthesis bifunctional protein ArgJ.